The following is a 152-amino-acid chain: MANSERTFIAIKPDGVQRGLIGEIIKRFEQKGFRLVAMKFMRASEDLLKEHYIDLKDRPFFAGLVKYMHSGPVVAMVWEGLNVVKTGRVMLGETNPADSKPGTIRGDFCIQVGRNIIHGSDSVESAEKEIALWFHPEELVNYKSCAQNWIYE.

Residues lysine 12, phenylalanine 60, arginine 88, threonine 94, arginine 105, and asparagine 115 each coordinate ATP. The Pros-phosphohistidine intermediate role is filled by histidine 118.

This sequence belongs to the NDK family. In terms of assembly, homohexamer. It depends on Mg(2+) as a cofactor. The N-terminus is blocked.

It is found in the cytoplasm. It localises to the cell membrane. The protein localises to the nucleus. It carries out the reaction a 2'-deoxyribonucleoside 5'-diphosphate + ATP = a 2'-deoxyribonucleoside 5'-triphosphate + ADP. It catalyses the reaction a ribonucleoside 5'-diphosphate + ATP = a ribonucleoside 5'-triphosphate + ADP. Its activity is regulated as follows. Autophosphorylation at His-118 increases serine/threonine protein kinase activity of the enzyme. Interaction with the SET complex inhibits exonuclease activity. Major role in the synthesis of nucleoside triphosphates other than ATP. Possesses nucleoside-diphosphate kinase, serine/threonine-specific protein kinase, geranyl and farnesyl pyrophosphate kinase, histidine protein kinase and 3'-5' exonuclease activities. Involved in cell proliferation, differentiation and development, signal transduction, G protein-coupled receptor endocytosis, and gene expression. Required for neural development including neural patterning and cell fate determination. The polypeptide is Nucleoside diphosphate kinase A 1 (NME1-1) (Bos taurus (Bovine)).